The following is a 1249-amino-acid chain: Minor capsid protein M1249L (1249 aa).

It belongs to the asfivirus M1249L family. In terms of assembly, interacts with the minor capsid protein p17 and with the hexon capsid protein p72 capsomers; these interactions form a rigid zipper structure that stabilizes the capsomers. Interacts with host IRF3.

It is found in the virion. The protein resides in the host cytoplasm. Together with the penton and the other minor capsid proteins (p17, p49), forms a complicated network immediately below the outer capsid shell, stabilizing the whole capsid. In addition, blocks IFN-beta transactivation mediated by the cGAS-STING pathway and regulates the transcriptional activity of IFN-beta. Mechanistically, suppresses the phosphorylation of host key adapter protein TBK1 and degrades host IRF3 in the cytoplasm. This chain is Minor capsid protein M1249L, found in African swine fever virus (isolate Tick/South Africa/Pretoriuskop Pr4/1996) (ASFV).